The primary structure comprises 613 residues: Dihydroxy-acid dehydratase (613 aa).

Asp-81 serves as a coordination point for Mg(2+). Cys-122 is a binding site for [2Fe-2S] cluster. Asp-123 and Lys-124 together coordinate Mg(2+). Position 124 is an N6-carboxylysine (Lys-124). Cys-193 serves as a coordination point for [2Fe-2S] cluster. Glu-489 contacts Mg(2+). Ser-515 functions as the Proton acceptor in the catalytic mechanism.

Belongs to the IlvD/Edd family. In terms of assembly, homodimer. It depends on [2Fe-2S] cluster as a cofactor. Mg(2+) is required as a cofactor.

It carries out the reaction (2R)-2,3-dihydroxy-3-methylbutanoate = 3-methyl-2-oxobutanoate + H2O. The enzyme catalyses (2R,3R)-2,3-dihydroxy-3-methylpentanoate = (S)-3-methyl-2-oxopentanoate + H2O. The protein operates within amino-acid biosynthesis; L-isoleucine biosynthesis; L-isoleucine from 2-oxobutanoate: step 3/4. It functions in the pathway amino-acid biosynthesis; L-valine biosynthesis; L-valine from pyruvate: step 3/4. In terms of biological role, functions in the biosynthesis of branched-chain amino acids. Catalyzes the dehydration of (2R,3R)-2,3-dihydroxy-3-methylpentanoate (2,3-dihydroxy-3-methylvalerate) into 2-oxo-3-methylpentanoate (2-oxo-3-methylvalerate) and of (2R)-2,3-dihydroxy-3-methylbutanoate (2,3-dihydroxyisovalerate) into 2-oxo-3-methylbutanoate (2-oxoisovalerate), the penultimate precursor to L-isoleucine and L-valine, respectively. In Pseudomonas putida (strain ATCC 47054 / DSM 6125 / CFBP 8728 / NCIMB 11950 / KT2440), this protein is Dihydroxy-acid dehydratase.